A 1021-amino-acid polypeptide reads, in one-letter code: Probable calcium-transporting ATPase 6, plasma membrane-type (1021 aa).

Residues 1-155 (MEGGRSWSIE…RSFWMFVWDA (155 aa)) lie on the Cytoplasmic side of the membrane. Transmembrane regions (helical) follow at residues 156 to 176 (LHDLTLIILVVCALVSIVVGL) and 181 to 201 (WPMGIYDGFGIILSILLVVLV). At 202–241 (TATSDYQQARKFMELDREKQKIYIRVTRDKKTKEVLVHDL) the chain is on the cytoplasmic side. 2 helical membrane passes run 242–262 (VVGDILHLSIGDVVPADGLFI) and 338–358 (VATIIGQIGLVFAVLTFLVLL). Residues 359–384 (ARFLADKGMHVGLLNWSANDALTIVN) are Cytoplasmic-facing. A helical transmembrane segment spans residues 385–405 (YFAIAVTIIVVAVPEGLPLAV). Residue D441 is the 4-aspartylphosphate intermediate of the active site. Residues D740 and D744 each coordinate Mg(2+). The helical transmembrane segment at 807–827 (IVALIVNFVSACIIGSAPLTA) threads the bilayer. The Cytoplasmic segment spans residues 828-829 (VQ). 2 helical membrane passes run 830-850 (LLWVNMIMDTLGALALATEPP) and 879-899 (GLYQLLVLATLMVIGKKLLSI). Residues 900-942 (EGPQSDKTINTLIFNSFVFCQVFNEINCREMEKINVLQGIFRN) are Cytoplasmic-facing. 2 helical membrane passes run 943–963 (WIFVGILTATVIFQVIIVEFL) and 974–994 (GELWLLSVVIGSISMIISVIL). At 995–1021 (KCIPVEFNKTNTKPHGYELIPEGPEIL) the chain is on the cytoplasmic side.

It belongs to the cation transport ATPase (P-type) (TC 3.A.3) family. Type IIB subfamily.

It localises to the membrane. The catalysed reaction is Ca(2+)(in) + ATP + H2O = Ca(2+)(out) + ADP + phosphate + H(+). With respect to regulation, activated by calmodulin. Functionally, this magnesium-dependent enzyme catalyzes the hydrolysis of ATP coupled with the translocation of calcium from the cytosol out of the cell, into the endoplasmic reticulum, or into organelles. This chain is Probable calcium-transporting ATPase 6, plasma membrane-type, found in Oryza sativa subsp. japonica (Rice).